The chain runs to 491 residues: Nucleoside transporter 1.1 (491 aa).

6 consecutive transmembrane segments (helical) span residues Phe-27–Val-47, Tyr-82–Phe-102, Val-109–Pro-129, Ala-136–Phe-156, Ser-173–Val-193, and Lys-209–Leu-229. Positions Cys-260–Arg-273 are enriched in basic and acidic residues. Disordered regions lie at residues Cys-260–Glu-280 and Ala-290–Val-309. Asn-274 is a glycosylation site (N-linked (GlcNAc...) asparagine). 5 helical membrane passes run Met-333–Val-353, Trp-361–Pro-381, Trp-395–Ser-415, Val-427–Gly-447, and Phe-460–Leu-480.

It belongs to the SLC29A/ENT transporter (TC 2.A.57) family.

Its subcellular location is the membrane. It catalyses the reaction adenosine(in) + H(+)(in) = adenosine(out) + H(+)(out). It carries out the reaction uridine(in) + H(+)(in) = uridine(out) + H(+)(out). Functionally, sodium-independent high affinity nucleoside:H(+) symporter; transports adenosine and uridine. Can transport cytidine and thymidine. This chain is Nucleoside transporter 1.1, found in Leishmania donovani.